A 156-amino-acid polypeptide reads, in one-letter code: UPF0266 membrane protein NT01EI_1718 (156 aa).

The next 3 membrane-spanning stretches (helical) occupy residues 6-26 (IALLVFIVLFLLYAIYDEAIM), 46-63 (DSLIFIGLLAILVYRNIS), and 67-87 (APFTTWLLATLMVVAIYIFYL).

The protein belongs to the UPF0266 family.

Its subcellular location is the cell inner membrane. This is UPF0266 membrane protein NT01EI_1718 from Edwardsiella ictaluri (strain 93-146).